The following is a 212-amino-acid chain: Peptide methionine sulfoxide reductase MsrA (212 aa).

Cys-52 is an active-site residue.

This sequence belongs to the MsrA Met sulfoxide reductase family.

It catalyses the reaction L-methionyl-[protein] + [thioredoxin]-disulfide + H2O = L-methionyl-(S)-S-oxide-[protein] + [thioredoxin]-dithiol. The enzyme catalyses [thioredoxin]-disulfide + L-methionine + H2O = L-methionine (S)-S-oxide + [thioredoxin]-dithiol. Functionally, has an important function as a repair enzyme for proteins that have been inactivated by oxidation. Catalyzes the reversible oxidation-reduction of methionine sulfoxide in proteins to methionine. This Yersinia enterocolitica serotype O:8 / biotype 1B (strain NCTC 13174 / 8081) protein is Peptide methionine sulfoxide reductase MsrA.